Reading from the N-terminus, the 335-residue chain is Biotin synthase (335 aa).

The 229-residue stretch at 46–274 (YKVQLASLFS…KSKIRLSAGR (229 aa)) folds into the Radical SAM core domain. Residues C61, C65, and C68 each contribute to the [4Fe-4S] cluster site. The [2Fe-2S] cluster site is built by C105, C137, C197, and R269.

The protein belongs to the radical SAM superfamily. Biotin synthase family. In terms of assembly, homodimer. [4Fe-4S] cluster is required as a cofactor. [2Fe-2S] cluster serves as cofactor.

It catalyses the reaction (4R,5S)-dethiobiotin + (sulfur carrier)-SH + 2 reduced [2Fe-2S]-[ferredoxin] + 2 S-adenosyl-L-methionine = (sulfur carrier)-H + biotin + 2 5'-deoxyadenosine + 2 L-methionine + 2 oxidized [2Fe-2S]-[ferredoxin]. Its pathway is cofactor biosynthesis; biotin biosynthesis; biotin from 7,8-diaminononanoate: step 2/2. Functionally, catalyzes the conversion of dethiobiotin (DTB) to biotin by the insertion of a sulfur atom into dethiobiotin via a radical-based mechanism. The protein is Biotin synthase of Prochlorococcus marinus (strain MIT 9515).